A 178-amino-acid polypeptide reads, in one-letter code: Transcription antitermination protein NusB (178 aa).

Belongs to the NusB family.

Its function is as follows. Involved in transcription antitermination. Required for transcription of ribosomal RNA (rRNA) genes. Binds specifically to the boxA antiterminator sequence of the ribosomal RNA (rrn) operons. This chain is Transcription antitermination protein NusB, found in Alkalilimnicola ehrlichii (strain ATCC BAA-1101 / DSM 17681 / MLHE-1).